The primary structure comprises 758 residues: DNA ligase (758 aa).

Residues 1–28 (MPENFGAMRQDGLVSTSESDSPAPAATP) form a disordered region. NAD(+)-binding positions include 60–64 (DAEFD), 109–110 (SL), and E148. K150 acts as the N6-AMP-lysine intermediate in catalysis. 4 residues coordinate NAD(+): R171, E208, K324, and K348. Zn(2+) contacts are provided by C442, C445, C461, and C467. The BRCT domain maps to 660 to 749 (SVRRTLAGLT…PDHSAEAEEN (90 aa)). The interval 735–758 (LLAHGPDHSAEAEENESEGSTTND) is disordered.

Belongs to the NAD-dependent DNA ligase family. LigA subfamily. It depends on Mg(2+) as a cofactor. Mn(2+) serves as cofactor.

It carries out the reaction NAD(+) + (deoxyribonucleotide)n-3'-hydroxyl + 5'-phospho-(deoxyribonucleotide)m = (deoxyribonucleotide)n+m + AMP + beta-nicotinamide D-nucleotide.. Functionally, DNA ligase that catalyzes the formation of phosphodiester linkages between 5'-phosphoryl and 3'-hydroxyl groups in double-stranded DNA using NAD as a coenzyme and as the energy source for the reaction. It is essential for DNA replication and repair of damaged DNA. The sequence is that of DNA ligase from Renibacterium salmoninarum (strain ATCC 33209 / DSM 20767 / JCM 11484 / NBRC 15589 / NCIMB 2235).